The following is a 71-amino-acid chain: uncharacterized protein (71 aa).

The next 2 membrane-spanning stretches (helical) occupy residues 9-29 (FVIF…NINF) and 41-61 (FVAL…FFGL).

The protein localises to the membrane. This is an uncharacterized protein from Acheta domesticus (House cricket).